Consider the following 194-residue polypeptide: UPF0215 protein PF2042 (194 aa).

Belongs to the UPF0215 family.

In Pyrococcus furiosus (strain ATCC 43587 / DSM 3638 / JCM 8422 / Vc1), this protein is UPF0215 protein PF2042.